The following is a 502-amino-acid chain: Probable malate:quinone oxidoreductase (502 aa).

Belongs to the MQO family. Requires FAD as cofactor.

The enzyme catalyses (S)-malate + a quinone = a quinol + oxaloacetate. It participates in carbohydrate metabolism; tricarboxylic acid cycle; oxaloacetate from (S)-malate (quinone route): step 1/1. This chain is Probable malate:quinone oxidoreductase, found in Synechococcus sp. (strain CC9605).